Consider the following 519-residue polypeptide: Dolichol kinase (519 aa).

Residues 1–47 (MVAIIPHASFTTIKLTQKTEGSQMPTEEICKINMRTRKFDVGGNSRD) lie on the Cytoplasmic side of the membrane. The helical transmembrane segment at 48–68 (FECFYSNFVQTVILLGTFFYC) threads the bilayer. Over 69-88 (VERLQPWSIVTADISYKQIF) the chain is Lumenal. Residues 89-109 (VNVFVVCLIMVGLIFTKYWQH) form a helical membrane-spanning segment. Residues 110 to 118 (GYKSLPKFD) are Cytoplasmic-facing. Residues 119–139 (TIYSLYLPFMVSLLFDTSSTV) form a helical membrane-spanning segment. Topologically, residues 140–151 (INTILILSVLNS) are lumenal. The chain crosses the membrane as a helical span at residues 152–172 (YRWRTQLVVIILQLCLIFFNF). The Cytoplasmic portion of the chain corresponds to 173-181 (EAGDRLKNI). The chain crosses the membrane as a helical span at residues 182-203 (ISIVINSLLSLILKYIGQLKSL). The Lumenal segment spans residues 204 to 223 (DNIDSNLFSILLTNILYVSE). Residues 224 to 244 (AGTVHFRILKGIILALTTIIS) traverse the membrane as a helical segment. Topologically, residues 245–253 (INYVLKKVM) are cytoplasmic. The chain crosses the membrane as a helical span at residues 254–274 (HFKPFMLSISFAIGLPLFANT). Over 275–294 (FIHLEDGENPLLWLVKYILE) the chain is Lumenal. The chain crosses the membrane as a helical span at residues 295 to 315 (STIRQKILFAWSSILILSIPS). The Cytoplasmic segment spans residues 316-326 (ILIEKDSLSLN). Residues 327–347 (TSRKLWHFIIFLLIIPSFQMD) form a helical membrane-spanning segment. Over 348-349 (SN) the chain is Lumenal. A helical membrane pass occupies residues 350 to 370 (FVKIALSGTIPVFLSIEYIRF). Topologically, residues 371–394 (QNLPPLGSAIELQLRRFADDRDHS) are cytoplasmic. The helical transmembrane segment at 395-415 (GPLIISYLYLLFGISTPLLMN) threads the bilayer. Residues 416–417 (NS) lie on the Lumenal side of the membrane. Residues 418–438 (PMGLIGLGIGDSLASIIGKRY) form a helical membrane-spanning segment. Over 439-449 (GRIRWKGTQKT) the chain is Cytoplasmic. Residues 450–470 (LEGTLAFIVTSFIVCLVLLRF) traverse the membrane as a helical segment. Residues 471–472 (DK) lie on the Lumenal side of the membrane. A helical transmembrane segment spans residues 473-493 (AAIFNHLTTLQLLTLCTLSGV). Topologically, residues 494–519 (LEGNSVLNDNILIPAFMMICEKLITL) are cytoplasmic.

It belongs to the polyprenol kinase family.

Its subcellular location is the endoplasmic reticulum membrane. The catalysed reaction is a di-trans,poly-cis-dolichol + CTP = a di-trans,poly-cis-dolichyl phosphate + CDP + H(+). Its pathway is protein modification; protein glycosylation. Functionally, catalyzes CTP-mediated phosphorylation of dolichol, the terminal step in de novo dolichyl monophosphate (Dol-P) biosynthesis. Dol-P is a lipid carrier essential for the synthesis of N-linked and O-linked oligosaccharides and for GPI anchors. The sequence is that of Dolichol kinase (SEC59) from Saccharomyces cerevisiae (strain ATCC 204508 / S288c) (Baker's yeast).